Consider the following 502-residue polypeptide: ATP synthase subunit alpha (502 aa).

169–176 provides a ligand contact to ATP; the sequence is GDRQTGKT.

The protein belongs to the ATPase alpha/beta chains family. In terms of assembly, F-type ATPases have 2 components, CF(1) - the catalytic core - and CF(0) - the membrane proton channel. CF(1) has five subunits: alpha(3), beta(3), gamma(1), delta(1), epsilon(1). CF(0) has three main subunits: a(1), b(2) and c(9-12). The alpha and beta chains form an alternating ring which encloses part of the gamma chain. CF(1) is attached to CF(0) by a central stalk formed by the gamma and epsilon chains, while a peripheral stalk is formed by the delta and b chains.

It is found in the cell inner membrane. It catalyses the reaction ATP + H2O + 4 H(+)(in) = ADP + phosphate + 5 H(+)(out). Functionally, produces ATP from ADP in the presence of a proton gradient across the membrane. The alpha chain is a regulatory subunit. This chain is ATP synthase subunit alpha, found in Desulfovibrio desulfuricans (strain ATCC 27774 / DSM 6949 / MB).